Consider the following 141-residue polypeptide: Granulocyte-macrophage colony-stimulating factor (141 aa).

Residues 1 to 17 (MWLQNLLFLGIVVYSLS) form the signal peptide. Ser-22 is a glycosylation site (O-linked (GalNAc...) serine). Thr-27 is a glycosylation site (O-linked (GalNAc...) threonine). 2 cysteine pairs are disulfide-bonded: Cys-68/Cys-110 and Cys-102/Cys-135. 2 N-linked (GlcNAc...) asparagine glycosylation sites follow: Asn-83 and Asn-92.

This sequence belongs to the GM-CSF family. In terms of assembly, monomer. The signaling GM-CSF receptor complex is a dodecamer of two head-to-head hexamers of two alpha, two beta, and two ligand subunits.

The protein resides in the secreted. In terms of biological role, cytokine that stimulates the growth and differentiation of hematopoietic precursor cells from various lineages, including granulocytes, macrophages, eosinophils and erythrocytes. This is Granulocyte-macrophage colony-stimulating factor (Csf2) from Mus musculus (Mouse).